Here is a 57-residue protein sequence, read N- to C-terminus: Large ribosomal subunit protein bL32c (57 aa).

In terms of assembly, component of the chloroplast large ribosomal subunit (LSU). Mature 70S chloroplast ribosomes of higher plants consist of a small (30S) and a large (50S) subunit. The 30S small subunit contains 1 molecule of ribosomal RNA (16S rRNA) and 24 different proteins. The 50S large subunit contains 3 rRNA molecules (23S, 5S and 4.5S rRNA) and 33 different proteins.

The protein resides in the plastid. It is found in the chloroplast. Component of the chloroplast ribosome (chloro-ribosome), a dedicated translation machinery responsible for the synthesis of chloroplast genome-encoded proteins, including proteins of the transcription and translation machinery and components of the photosynthetic apparatus. The chain is Large ribosomal subunit protein bL32c (rpl32) from Spinacia oleracea (Spinach).